The chain runs to 256 residues: Global transcriptional regulator CodY (256 aa).

The segment at 1-155 (MSLLSKTREL…AATVIGMEIL (155 aa)) is GAF domain. Positions 203–222 (ASKVADRVGITRSVIVNALR) form a DNA-binding region, H-T-H motif.

Belongs to the CodY family.

It localises to the cytoplasm. In terms of biological role, DNA-binding global transcriptional regulator which is involved in the adaptive response to starvation and acts by directly or indirectly controlling the expression of numerous genes in response to nutrient availability. During rapid exponential growth, CodY is highly active and represses genes whose products allow adaptation to nutrient depletion. The protein is Global transcriptional regulator CodY of Staphylococcus epidermidis (strain ATCC 35984 / DSM 28319 / BCRC 17069 / CCUG 31568 / BM 3577 / RP62A).